We begin with the raw amino-acid sequence, 201 residues long: Cysteine dioxygenase type 1 (201 aa).

Fe cation-binding residues include His86, His88, and His141. The segment at residues 93–158 is a cross-link (3'-(S-cysteinyl)-tyrosine (Cys-Tyr)); it reads CFLKLLQGQL…TEPAVSLHLY (66 aa).

It belongs to the cysteine dioxygenase family. In terms of assembly, monomer. Fe cation serves as cofactor. Ni(2+) is required as a cofactor. It depends on Zn(2+) as a cofactor. In terms of processing, the thioether cross-link between Cys-93 and Tyr-158 plays a structural role through stabilizing the Fe(2+) ion, and prevents the production of highly damaging free hydroxyl radicals by holding the oxygen radical via hydroxyl hydrogen.

The catalysed reaction is L-cysteine + O2 = 3-sulfino-L-alanine + H(+). It functions in the pathway organosulfur biosynthesis; taurine biosynthesis; hypotaurine from L-cysteine: step 1/2. In terms of biological role, catalyzes the oxidation of cysteine to cysteine sulfinic acid with addition of molecular dioxygen. In Danio rerio (Zebrafish), this protein is Cysteine dioxygenase type 1 (cdo1).